The following is a 232-amino-acid chain: UPF0758 protein FN0909 (232 aa).

Residues 110–232 (KISNKDILLK…YFSFLEEGLI (123 aa)) enclose the MPN domain. Zn(2+) contacts are provided by H181, H183, and D194. The short motif at 181 to 194 (HNHPSDNITPSKSD) is the JAMM motif element.

It belongs to the UPF0758 family.

The sequence is that of UPF0758 protein FN0909 from Fusobacterium nucleatum subsp. nucleatum (strain ATCC 25586 / DSM 15643 / BCRC 10681 / CIP 101130 / JCM 8532 / KCTC 2640 / LMG 13131 / VPI 4355).